Consider the following 1131-residue polypeptide: Major DNA-binding protein (1131 aa).

Positions Phe790 to Trp791 match the Required for filament formation motif. Positions Leu1112–Leu1131 are required for nuclear localization.

It belongs to the herpesviridae major DNA-binding protein family. As to quaternary structure, homooligomers. Forms double-helical filaments necessary for the formation of replication compartments within the host nucleus. Interacts with the origin-binding protein. Interacts with the helicase primase complex; this interaction stimulates primer synthesis activity of the helicase-primase complex. Interacts with the DNA polymerase. Interacts with the alkaline exonuclease; this interaction increases its nuclease processivity.

It is found in the host nucleus. Single-stranded DNA-binding protein required for DNA replication. In terms of biological role, plays several crucial roles in viral infection. Participates in the opening of the viral DNA origin to initiate replication by interacting with the origin-binding protein. May disrupt loops, hairpins and other secondary structures present on ssDNA to reduce and eliminate pausing of viral DNA polymerase at specific sites during elongation. Promotes viral DNA recombination by performing strand-transfer, characterized by the ability to transfer a DNA strand from a linear duplex to a complementary single-stranded DNA circle. Can also catalyze the renaturation of complementary single strands. Additionally, reorganizes the host cell nucleus, leading to the formation of prereplicative sites and replication compartments. This process is driven by the protein which can form double-helical filaments in the absence of DNA. This Human herpesvirus 7 (strain JI) (HHV-7) protein is Major DNA-binding protein.